We begin with the raw amino-acid sequence, 290 residues long: MTILVLGGRGKTASRLSLLLDNAGVPFLVGSSSTSYVGPYKMTHFDWLNEDTWTNVFLRASLDGIDPISAVYLVGGHAPELVDPGIRFINVARAQGVNRFVLLSASNIAKGTHSMGILHAHLDSLEDVQYVVLRPTWFMENLLEDPHVSWIKKEDKIYSATGDGKIPFISADDIARVAFSVLTEWKSQRAQEYFVLGPELLSYDQVADILTTVLGRKITHVSLAEADLARLLRDDVGLPPDFAAMLASMETDVKHGTEVRNSHDVKKVTGSLPCSFLDFAEQEKARWMRH.

It belongs to the fgaFS/easG family.

The enzyme catalyses festuclavine + NAD(+) = 6,8-dimethyl-6,7-didehydroergoline + NADH + H(+). The protein operates within alkaloid biosynthesis; ergot alkaloid biosynthesis. Functionally, festuclavine dehydrogenase; part of the gene cluster that mediates the biosynthesis of fumiclavanine C, a fungal ergot alkaloid. DmaW catalyzes the first step of ergot alkaloid biosynthesis by condensing dimethylallyl diphosphate (DMAP) and tryptophan to form 4-dimethylallyl-L-tryptophan. The second step is catalyzed by the methyltransferase easF that methylates 4-dimethylallyl-L-tryptophan in the presence of S-adenosyl-L-methionine, resulting in the formation of 4-dimethylallyl-L-abrine. The catalase easC and the FAD-dependent oxidoreductase easE then transform 4-dimethylallyl-L-abrine to chanoclavine-I which is further oxidized by EasD in the presence of NAD(+), resulting in the formation of chanoclavine-I aldehyde. EasA reduces chanoclavine-I aldehyde to dihydrochanoclavine-I aldehyde that spontaneously dehydrates to form 6,8-dimethyl-6,7-didehydroergoline. EasG then catalyzes the reduction of 6,8-dimethyl-6,7-didehydroergoline to form festuclavine. Hydrolysis of festuclavine by easM then leads to the formation of fumigaclavine B which is in turn acetylated by easN to fumigaclavine A. Finally, easL catalyzes the conversion of fumigaclavine A into fumigaclavine C by attaching a dimethylallyl moiety to C-2 of the indole nucleus. The chain is Festuclavine dehydrogenase easG from Aspergillus fumigatus (strain ATCC MYA-4609 / CBS 101355 / FGSC A1100 / Af293) (Neosartorya fumigata).